A 150-amino-acid polypeptide reads, in one-letter code: Large ribosomal subunit protein eL19 (150 aa).

Residues K56–M89 form a disordered region. The span at K71 to M89 shows a compositional bias: basic residues.

This sequence belongs to the eukaryotic ribosomal protein eL19 family. As to quaternary structure, part of the 50S ribosomal subunit.

In terms of biological role, binds to the 23S rRNA. This chain is Large ribosomal subunit protein eL19, found in Thermococcus kodakarensis (strain ATCC BAA-918 / JCM 12380 / KOD1) (Pyrococcus kodakaraensis (strain KOD1)).